The sequence spans 54 residues: Rubredoxin (54 aa).

A Rubredoxin-like domain is found at 2–52 (AKWVCKICGYIYDEDAGDPDNGISPGTKFEELPDDWVCPICGAPKSEFEKL). Fe cation is bound by residues Cys-6, Cys-9, Cys-39, and Cys-42.

Belongs to the rubredoxin family. The cofactor is Fe(3+).

Its function is as follows. Rubredoxin is a small nonheme, iron protein lacking acid-labile sulfide. Its single Fe, chelated to 4 Cys, functions as an electron acceptor and may also stabilize the conformation of the molecule. This chain is Rubredoxin (rub), found in Pyrococcus furiosus (strain ATCC 43587 / DSM 3638 / JCM 8422 / Vc1).